Reading from the N-terminus, the 501-residue chain is Beta-secretase 1 (501 aa).

An N-terminal signal peptide occupies residues 1-21 (MAQALPWLLLWMGAGVLPAHG). A propeptide spanning residues 22–45 (TQHGIRLPLRSGLGGAPLGLRLPR) is cleaved from the precursor. The Extracellular portion of the chain corresponds to 22–457 (TQHGIRLPLR…PQTDESTLMT (436 aa)). Positions 39–58 (LGLRLPRETDEEPEEPGRRG) are disordered. A Peptidase A1 domain is found at 75–416 (YYVEMTVGSP…DRARKRIGFA (342 aa)). Residue aspartate 93 is part of the active site. An N6-acetyllysine modification is found at lysine 126. 3 N-linked (GlcNAc...) asparagine glycosylation sites follow: asparagine 153, asparagine 172, and asparagine 223. 3 disulfide bridges follow: cysteine 216-cysteine 420, cysteine 278-cysteine 443, and cysteine 330-cysteine 380. N6-acetyllysine is present on residues lysine 275, lysine 279, and lysine 285. Aspartate 289 is an active-site residue. N6-acetyllysine occurs at positions 299, 300, and 307. Asparagine 354 carries N-linked (GlcNAc...) asparagine glycosylation. The chain crosses the membrane as a helical span at residues 458–478 (IAYVMAAICALFMLPLCLMVC). 4 S-palmitoyl cysteine lipidation sites follow: cysteine 474, cysteine 478, cysteine 482, and cysteine 485. The Cytoplasmic segment spans residues 479 to 501 (QWRCLRCLRQQHDDFADDISLLK). The segment at 479 to 501 (QWRCLRCLRQQHDDFADDISLLK) is interaction with RTN3. A DXXLL motif is present at residues 496–500 (DISLL). Phosphoserine is present on serine 498. A Glycyl lysine isopeptide (Lys-Gly) (interchain with G-Cter in ubiquitin) cross-link involves residue lysine 501.

This sequence belongs to the peptidase A1 family. Monomer. Interacts (via DXXLL motif) with GGA1, GGA2 and GGA3 (via their VHS domain); the interaction highly increases when BACE1 is phosphorylated at Ser-498. Interacts with RTN1; RTN2; RTN3 and RTN4; the interaction leads to inhibition of amyloid precursor protein processing. Interacts with SNX6. Interacts with PCSK9. Interacts with NAT8 and NAT8B. Interacts with BIN1. Interacts (via extracellular domain) with ADAM10 (via extracellular domain). Interacts with SORL1; this interaction may affect binding with APP and hence reduce APP cleavage. Interacts with NRDC AND NRG1. N-Glycosylated. Addition of a bisecting N-acetylglucosamine by MGAT3 blocks lysosomal targeting, further degradation and is required for maintaining stability under stress conditions. In terms of processing, acetylated in the endoplasmic reticulum at Lys-126, Lys-275, Lys-279, Lys-285, Lys-299, Lys-300 and Lys-307. Acetylation by NAT8 and NAT8B is transient and deacetylation probably occurs in the Golgi. Acetylation regulates the maturation, the transport to the plasma membrane, the stability and the expression of the protein. Post-translationally, palmitoylation mediates lipid raft localization. Ubiquitinated at Lys-501, ubiquitination leads to lysosomal degradation. Monoubiquitinated and 'Lys-63'-linked polyubitinated. Deubiquitnated by USP8; inhibits lysosomal degradation. In terms of processing, phosphorylation at Ser-498 is required for interaction with GGA1 and retrograded transport from endosomal compartments to the trans-Golgi network. Non-phosphorylated BACE1 enters a direct recycling route to the cell surface. In terms of tissue distribution, expressed at high levels in the brain and pancreas. In the brain, expression is highest in the substantia nigra, locus coruleus and medulla oblongata.

It is found in the cell membrane. It localises to the golgi apparatus. Its subcellular location is the trans-Golgi network. The protein localises to the endoplasmic reticulum. The protein resides in the endosome. It is found in the cell surface. It localises to the cytoplasmic vesicle membrane. Its subcellular location is the membrane raft. The protein localises to the lysosome. The protein resides in the late endosome. It is found in the early endosome. It localises to the recycling endosome. Its subcellular location is the cell projection. The protein localises to the axon. The protein resides in the dendrite. The catalysed reaction is Broad endopeptidase specificity. Cleaves Glu-Val-Asn-Leu-|-Asp-Ala-Glu-Phe in the Swedish variant of Alzheimer's amyloid precursor protein.. With respect to regulation, inhibited by RTN3 and RTN4. Responsible for the proteolytic processing of the amyloid precursor protein (APP). Cleaves at the N-terminus of the A-beta peptide sequence, between residues 671 and 672 of APP, leads to the generation and extracellular release of beta-cleaved soluble APP, and a corresponding cell-associated C-terminal fragment which is later released by gamma-secretase. Cleaves CHL1. This chain is Beta-secretase 1, found in Homo sapiens (Human).